The primary structure comprises 190 residues: MAKANEIKRGSAVSYNGKLLLVKDIDIQAPSARGASTLYKMRFTDIRTGQKVEERFKGDDILDTISLTRRSVNFSYIDGDEYVFMDDEDFTPYHFKKEQIEEELLFIPEGGLPGMQVLTIEGQVIALELPQTVDMVIEETAPGIKGASASARTKPAKMSTGLTVQVPEYISSGERIRIHIAERRYMGRCD.

The protein belongs to the elongation factor P family.

This chain is Elongation factor P-like protein, found in Photorhabdus laumondii subsp. laumondii (strain DSM 15139 / CIP 105565 / TT01) (Photorhabdus luminescens subsp. laumondii).